A 371-amino-acid polypeptide reads, in one-letter code: Histidinol-phosphate aminotransferase (371 aa).

Position 228 is an N6-(pyridoxal phosphate)lysine (Lys228).

This sequence belongs to the class-II pyridoxal-phosphate-dependent aminotransferase family. Histidinol-phosphate aminotransferase subfamily. Requires pyridoxal 5'-phosphate as cofactor.

The catalysed reaction is L-histidinol phosphate + 2-oxoglutarate = 3-(imidazol-4-yl)-2-oxopropyl phosphate + L-glutamate. The protein operates within amino-acid biosynthesis; L-histidine biosynthesis; L-histidine from 5-phospho-alpha-D-ribose 1-diphosphate: step 7/9. This Methanococcus maripaludis (strain C7 / ATCC BAA-1331) protein is Histidinol-phosphate aminotransferase.